The chain runs to 306 residues: UDP-3-O-acyl-N-acetylglucosamine deacetylase (306 aa).

Residues histidine 81, histidine 241, and aspartate 245 each coordinate Zn(2+). The active-site Proton donor is histidine 268.

This sequence belongs to the LpxC family. Zn(2+) is required as a cofactor.

It carries out the reaction a UDP-3-O-[(3R)-3-hydroxyacyl]-N-acetyl-alpha-D-glucosamine + H2O = a UDP-3-O-[(3R)-3-hydroxyacyl]-alpha-D-glucosamine + acetate. It participates in glycolipid biosynthesis; lipid IV(A) biosynthesis; lipid IV(A) from (3R)-3-hydroxytetradecanoyl-[acyl-carrier-protein] and UDP-N-acetyl-alpha-D-glucosamine: step 2/6. Its function is as follows. Catalyzes the hydrolysis of UDP-3-O-myristoyl-N-acetylglucosamine to form UDP-3-O-myristoylglucosamine and acetate, the committed step in lipid A biosynthesis. This chain is UDP-3-O-acyl-N-acetylglucosamine deacetylase, found in Hydrogenovibrio crunogenus (strain DSM 25203 / XCL-2) (Thiomicrospira crunogena).